A 542-amino-acid chain; its full sequence is Protein MGF 505-11L (542 aa).

It belongs to the asfivirus MGF 505 family.

Its function is as follows. Plays a role in virus cell tropism, and may be required for efficient virus replication in macrophages. The sequence is that of Protein MGF 505-11L from African swine fever virus (isolate Pig/Kenya/KEN-50/1950) (ASFV).